The primary structure comprises 1601 residues: Ectopic P granules protein 5 (1601 aa).

The tract at residues 1–109 (MAELVRPKKP…EAPPIPARNL (109 aa)) is disordered. Over residues 15–26 (RPQSDDAPRIPD) the composition is skewed to basic and acidic residues.

The protein belongs to the EPG5 family.

It is found in the cytoplasm. In terms of biological role, involved in autophagy. Has a role in the degradation of protein aggregates within autophagosomes. Essential for starvation-induced autotrophy and omegasome development. In Caenorhabditis briggsae, this protein is Ectopic P granules protein 5 (epg-5).